Consider the following 712-residue polypeptide: MEMFTFLLTCVFLPFVRGHSLFTCEPITVPRCMKMAYNMTFFPNLMRHYDQSTAAVKMEPFLPLANLECSPNIETFLCKAFVPACTDQINVVPPCRKFCEKVYSDCKKLIDTFGMRWPEELECDRLQYCDETVPVTFDPHTQFLGPQKNTEQVQRDIGFWCPRHLKTSGGQGYKFLGIDQCAPPCPNMYFKSDELEFAKSFIGIVSIFCLCATLFTFLTFLIDVKRFRYPERPIIYYSVCYSIVSLMYFIGFLLGDRTACNKADEKLELGDTVVLGSQNKACTVLFMFLYFFTMAGTVWWVILTITWFLAAGRKWSCEAIEQKAVWFHAVAWGIPGFLTVMLLAMNKVEGDNISGVCFVGLYDLDASRYFVLLPLCLCVFVGLSLLLAGIISLNHVRQVIQHDGRNQEKLKKFMIRIGVFSGLYLVPLVTLLGCYVYEQVNRITWEITWVSDHCRQYHIPCPYQAKTETRPELALFMIKYLMTLIVGISAVFWVGSKKTCTEWAGFFKRNRKRDPISESRRVLQESCEFFLKHNSKVKHKKKHYKPSSHKLKVISKSMGTSTGATANHGTSAVAITNHDYLGQETLTEIQTSPETSVREVRADGASTPRSREQDCGEPASPAASSSRLCEEQADRKGRAGNGTDKISISESTRSEGRVTPKSDVTETGPMQSSSLQVPGSSEPGSLKGSTSLLVHSASGGRKEHGTGSHSDT.

An N-terminal signal peptide occupies residues 1-18 (MEMFTFLLTCVFLPFVRG). In terms of domain architecture, FZ spans 19 to 132 (HSLFTCEPIT…CDRLQYCDET (114 aa)). Over 19–201 (HSLFTCEPIT…SDELEFAKSF (183 aa)) the chain is Extracellular. Intrachain disulfides connect Cys-24/Cys-85, Cys-32/Cys-78, Cys-69/Cys-106, Cys-95/Cys-129, and Cys-99/Cys-123. The N-linked (GlcNAc...) asparagine glycan is linked to Asn-38. Residues 202–222 (IGIVSIFCLCATLFTFLTFLI) form a helical membrane-spanning segment. Residues 223-233 (DVKRFRYPERP) are Cytoplasmic-facing. The helical transmembrane segment at 234–254 (IIYYSVCYSIVSLMYFIGFLL) threads the bilayer. Over 255-284 (GDRTACNKADEKLELGDTVVLGSQNKACTV) the chain is Extracellular. Residues 285–305 (LFMFLYFFTMAGTVWWVILTI) traverse the membrane as a helical segment. The Cytoplasmic segment spans residues 306–324 (TWFLAAGRKWSCEAIEQKA). Residues 325–345 (VWFHAVAWGIPGFLTVMLLAM) form a helical membrane-spanning segment. Residues 346 to 370 (NKVEGDNISGVCFVGLYDLDASRYF) are Extracellular-facing. Residue Asn-352 is glycosylated (N-linked (GlcNAc...) asparagine). Residues 371–391 (VLLPLCLCVFVGLSLLLAGII) traverse the membrane as a helical segment. The Cytoplasmic segment spans residues 392 to 416 (SLNHVRQVIQHDGRNQEKLKKFMIR). The helical transmembrane segment at 417–437 (IGVFSGLYLVPLVTLLGCYVY) threads the bilayer. At 438–473 (EQVNRITWEITWVSDHCRQYHIPCPYQAKTETRPEL) the chain is on the extracellular side. A helical transmembrane segment spans residues 474-494 (ALFMIKYLMTLIVGISAVFWV). Over 495–712 (GSKKTCTEWA…EHGTGSHSDT (218 aa)) the chain is Cytoplasmic. A Lys-Thr-X-X-X-Trp motif, mediates interaction with the PDZ domain of Dvl family members motif is present at residues 498-503 (KTCTEW). The interval 588–712 (EIQTSPETSV…EHGTGSHSDT (125 aa)) is disordered. Composition is skewed to basic and acidic residues over residues 628–637 (LCEEQADRKG) and 652–664 (TRSEGRVTPKSDV). Polar residues predominate over residues 668-693 (GPMQSSSLQVPGSSEPGSLKGSTSLL). The segment covering 700 to 712 (GRKEHGTGSHSDT) has biased composition (basic and acidic residues).

It belongs to the G-protein coupled receptor Fz/Smo family. In terms of assembly, interacts with LMBR1L. Post-translationally, ubiquitinated by ZNRF3, leading to its degradation by the proteasome.

The protein localises to the membrane. It localises to the cell membrane. It is found in the cell surface. Its subcellular location is the apical cell membrane. The protein resides in the cytoplasmic vesicle membrane. The protein localises to the endoplasmic reticulum membrane. In terms of biological role, receptor for Wnt proteins. Most of frizzled receptors are coupled to the beta-catenin canonical signaling pathway, which leads to the activation of disheveled proteins, inhibition of GSK-3 kinase, nuclear accumulation of beta-catenin and activation of Wnt target genes. A second signaling pathway involving PKC and calcium fluxes has been seen for some family members, but it is not yet clear if it represents a distinct pathway or if it can be integrated in the canonical pathway, as PKC seems to be required for Wnt-mediated inactivation of GSK-3 kinase. Both pathways seem to involve interactions with G-proteins. Activation by Wnt5A stimulates PKC activity via a G-protein-dependent mechanism. Involved in transduction and intercellular transmission of polarity information during tissue morphogenesis and/or in differentiated tissues. Together with FZD3, is involved in the neural tube closure and plays a role in the regulation of the establishment of planar cell polarity (PCP), particularly in the orientation of asymmetric bundles of stereocilia on the apical faces of a subset of auditory and vestibular sensory cells located in the inner ear. The chain is Frizzled-6 (FZD6) from Canis lupus familiaris (Dog).